The chain runs to 207 residues: Outer-membrane lipoprotein LolB (207 aa).

Residues 1-21 (MPLPDFRLIRLLPLAALVLTA) form the signal peptide. Cys22 carries N-palmitoyl cysteine lipidation. Cys22 carries the S-diacylglycerol cysteine lipid modification.

It belongs to the LolB family. As to quaternary structure, monomer.

Its subcellular location is the cell outer membrane. Functionally, plays a critical role in the incorporation of lipoproteins in the outer membrane after they are released by the LolA protein. In Shigella dysenteriae serotype 1 (strain Sd197), this protein is Outer-membrane lipoprotein LolB.